We begin with the raw amino-acid sequence, 655 residues long: Bifunctional lysine-specific demethylase and histidyl-hydroxylase NO66 (655 aa).

Over residues methionine 1–asparagine 16 the composition is skewed to polar residues. Disordered stretches follow at residues methionine 1–methionine 48 and glutamate 67–serine 122. A compositionally biased stretch (low complexity) spans serine 76 to lysine 86. The segment covering threonine 87–alanine 96 has biased composition (basic and acidic residues). Position 131 is a phosphoserine (serine 131). Threonine 137 carries the phosphothreonine modification. A Phosphoserine modification is found at serine 138. A disordered region spans residues lysine 185 to aspartate 210. The segment covering asparagine 194–aspartate 210 has biased composition (basic and acidic residues). The 146-residue stretch at cysteine 307–valine 452 folds into the JmjC domain. Residues histidine 353, aspartate 355, and histidine 418 each contribute to the Fe cation site.

It belongs to the ROX family. NO66 subfamily. Fe(2+) is required as a cofactor.

The protein resides in the nucleus. The catalysed reaction is N(6),N(6)-dimethyl-L-lysyl(36)-[histone H3] + 2 2-oxoglutarate + 2 O2 = L-lysyl(36)-[histone H3] + 2 formaldehyde + 2 succinate + 2 CO2. Oxygenase that can act as both a histone lysine demethylase and a ribosomal histidine hydroxylase. Specifically demethylates 'Lys-4' (H3K4me) and 'Lys-36' (H3K36me) of histone H3, thereby playing a central role in histone code. This Drosophila sechellia (Fruit fly) protein is Bifunctional lysine-specific demethylase and histidyl-hydroxylase NO66.